The sequence spans 498 residues: Cytochrome P450 monooxygenase aflU (498 aa).

Residues 5–27 (TVYTSLIGLLVALTVRSIYRVYF) traverse the membrane as a helical segment. N259 and N354 each carry an N-linked (GlcNAc...) asparagine glycan. C438 is a binding site for heme.

Belongs to the cytochrome P450 family. Heme serves as cofactor.

The protein resides in the membrane. Its pathway is mycotoxin biosynthesis; aflatoxin biosynthesis. Its function is as follows. Cytochrome P450 monooxygenase; part of the gene cluster that mediates the biosynthesis of aflatoxins, a group of polyketide-derived furanocoumarins, and part of the most toxic and carcinogenic compounds among the known mycotoxins. The four major aflatoxins produced by A.parasiticus are aflatoxin B1 (AFB1), aflatoxin B2 (AFB2), aflatoxin G1 (AFG1) and aflatoxin G2 (AFG2). Within the aflatoxin pathway, the cytochrome P450 monooxygenase aflU is involved in the last steps in which OMST is converted to aflatoxins B1 and G1, and DHOMST to aflatoxins B2 and G2. The biosynthesis of aflatoxins begins with the norsolorinic acid synthase aflC that combines a hexanoyl starter unit produced by the fatty acid synthase aflA/aflB and 7 malonyl-CoA extender units to synthesize the precursor NOR. The second step is the conversion of NOR to averantin and requires the norsolorinic acid ketoreductase aflD, which catalyzes the dehydration of norsolorinic acid to form (1'S)-averantin. The norsolorinic acid reductases aflE and aflF may also play a role in the conversion of NOR to AVN. The cytochrome P450 monooxygenase aflG then catalyzes the hydroxylation of AVN to 5'hydroxyaverantin (HAVN). The next step is performed by the 5'-hydroxyaverantin dehydrogenase aflH that transforms HAVN to 5'-oxoaverantin (OAVN) which is further converted to averufin (AVF) by aflK that plays a dual role in the pathway, as a 5'-oxoaverantin cyclase that mediates conversion of 5'-oxoaverantin, as well as a versicolorin B synthase in a later step in the pathway. The averufin oxidase aflI catalyzes the conversion of AVF to versiconal hemiacetal acetate (VHA). VHA is then the substrate for the versiconal hemiacetal acetate esterase aflJ to yield versiconal (VAL). Versicolorin B synthase aflK then converts VAL to versicolorin B (VERB) by closing the bisfuran ring of aflatoxin which is required for DNA-binding, thus giving to aflatoxin its activity as a mutagen. Then, the activity of the versicolorin B desaturase aflL leads to versicolorin A (VERA). A branch point starts from VERB since it can also be converted to dihydrodemethylsterigmatocystin (DMDHST), probably also by aflL, VERA being a precursor for aflatoxins B1 and G1, and DMDHST for aflatoxins B2 and G2. Next, the versicolorin reductase aflM and the cytochrome P450 monooxygenase aflN are involved in conversion of VERA to demethylsterigmatocystin (DMST). AflX and aflY seem also involved in this step, through probable aflX-mediated epoxide ring-opening step following versicolorin A oxidation and aflY-mediated Baeyer-Villiger oxidation required for the formation of the xanthone ring. The methyltransferase aflO then leads to the modification of DMST to sterigmatocystin (ST), and of DMDHST to dihydrosterigmatocystin (DHST). Both ST and DHST are then substrates of the O-methyltransferase aflP to yield O-methylsterigmatocystin (OMST) and dihydro-O-methylsterigmatocystin (DHOMST), respectively. Finally OMST is converted to aflatoxins B1 and G1, and DHOMST to aflatoxins B2 and G2, via the action of several enzymes including O-methylsterigmatocystin oxidoreductase aflQ, the cytochrome P450 monooxygenase aflU, but also the NADH-dependent flavin oxidoreductase nadA which is specifically required for the synthesis of AFG1. In Aspergillus parasiticus (strain ATCC 56775 / NRRL 5862 / SRRC 143 / SU-1), this protein is Cytochrome P450 monooxygenase aflU.